The primary structure comprises 113 residues: Putative pterin-4-alpha-carbinolamine dehydratase (113 aa).

It belongs to the pterin-4-alpha-carbinolamine dehydratase family.

It catalyses the reaction (4aS,6R)-4a-hydroxy-L-erythro-5,6,7,8-tetrahydrobiopterin = (6R)-L-erythro-6,7-dihydrobiopterin + H2O. The sequence is that of Putative pterin-4-alpha-carbinolamine dehydratase from Nitrosomonas europaea (strain ATCC 19718 / CIP 103999 / KCTC 2705 / NBRC 14298).